An 87-amino-acid polypeptide reads, in one-letter code: Acylphosphatase (87 aa).

The Acylphosphatase-like domain occupies 2–87; sequence RLTALVSGHV…ETGLREFHIY (86 aa). Catalysis depends on residues Arg17 and Asn35.

The protein belongs to the acylphosphatase family.

It catalyses the reaction an acyl phosphate + H2O = a carboxylate + phosphate + H(+). This chain is Acylphosphatase (acyP), found in Deinococcus radiodurans (strain ATCC 13939 / DSM 20539 / JCM 16871 / CCUG 27074 / LMG 4051 / NBRC 15346 / NCIMB 9279 / VKM B-1422 / R1).